The following is a 632-amino-acid chain: tRNA uridine 5-carboxymethylaminomethyl modification enzyme MnmG (632 aa).

FAD contacts are provided by residues 15-20 (GAGHAG), Ile127, and Ser182. 276–290 (GPRYCPSIEDKIVRF) contacts NAD(+). Gln373 is a binding site for FAD.

The protein belongs to the MnmG family. As to quaternary structure, homodimer. Heterotetramer of two MnmE and two MnmG subunits. Requires FAD as cofactor.

It is found in the cytoplasm. Its function is as follows. NAD-binding protein involved in the addition of a carboxymethylaminomethyl (cmnm) group at the wobble position (U34) of certain tRNAs, forming tRNA-cmnm(5)s(2)U34. The sequence is that of tRNA uridine 5-carboxymethylaminomethyl modification enzyme MnmG from Streptococcus pyogenes serotype M4 (strain MGAS10750).